We begin with the raw amino-acid sequence, 301 residues long: Nucleotide-binding protein MAB_2783c (301 aa).

Position 24 to 31 (24 to 31 (GLSGAGRG)) interacts with ATP. Position 75–78 (75–78 (DVRS)) interacts with GTP.

The protein belongs to the RapZ-like family.

Displays ATPase and GTPase activities. This chain is Nucleotide-binding protein MAB_2783c, found in Mycobacteroides abscessus (strain ATCC 19977 / DSM 44196 / CCUG 20993 / CIP 104536 / JCM 13569 / NCTC 13031 / TMC 1543 / L948) (Mycobacterium abscessus).